We begin with the raw amino-acid sequence, 274 residues long: Large ribosomal subunit protein uL2 (274 aa).

Disordered stretches follow at residues 28 to 55 (APHA…RHVG) and 224 to 274 (VAMN…RRRK).

The protein belongs to the universal ribosomal protein uL2 family. Part of the 50S ribosomal subunit. Forms a bridge to the 30S subunit in the 70S ribosome.

One of the primary rRNA binding proteins. Required for association of the 30S and 50S subunits to form the 70S ribosome, for tRNA binding and peptide bond formation. It has been suggested to have peptidyltransferase activity; this is somewhat controversial. Makes several contacts with the 16S rRNA in the 70S ribosome. The protein is Large ribosomal subunit protein uL2 of Pseudomonas putida (strain W619).